Here is a 342-residue protein sequence, read N- to C-terminus: S-adenosylmethionine:tRNA ribosyltransferase-isomerase (342 aa).

It belongs to the QueA family. As to quaternary structure, monomer.

It localises to the cytoplasm. The enzyme catalyses 7-aminomethyl-7-carbaguanosine(34) in tRNA + S-adenosyl-L-methionine = epoxyqueuosine(34) in tRNA + adenine + L-methionine + 2 H(+). The protein operates within tRNA modification; tRNA-queuosine biosynthesis. Functionally, transfers and isomerizes the ribose moiety from AdoMet to the 7-aminomethyl group of 7-deazaguanine (preQ1-tRNA) to give epoxyqueuosine (oQ-tRNA). The polypeptide is S-adenosylmethionine:tRNA ribosyltransferase-isomerase (Novosphingobium aromaticivorans (strain ATCC 700278 / DSM 12444 / CCUG 56034 / CIP 105152 / NBRC 16084 / F199)).